An 823-amino-acid polypeptide reads, in one-letter code: Putative E3 ubiquitin-protein ligase RF4 (823 aa).

Disordered stretches follow at residues 24–72 (TVSP…NGSV), 224–291 (SKLS…CSGS), and 432–464 (ESVT…SEEK). The segment covering 61 to 72 (KPQNHLSGNGSV) has biased composition (polar residues). Low complexity predominate over residues 224–240 (SKLSDSESLGAESNPPK). The span at 267-282 (FPNTPNSKKTQSSGTT) shows a compositional bias: polar residues. The segment covering 453-464 (SEKKSGSESEEK) has biased composition (basic and acidic residues). Residues 536–738 (ELKALRKERE…ELKLKSDYSR (203 aa)) adopt a coiled-coil conformation. Residues 768–808 (CVMCLSEEMSVIFLPCAHQVLCFKCNQLHEKEGMMDCPSCR) form an RING-type zinc finger.

Belongs to the RING-type zinc finger family.

The enzyme catalyses S-ubiquitinyl-[E2 ubiquitin-conjugating enzyme]-L-cysteine + [acceptor protein]-L-lysine = [E2 ubiquitin-conjugating enzyme]-L-cysteine + N(6)-ubiquitinyl-[acceptor protein]-L-lysine.. It participates in protein modification; protein ubiquitination. This is Putative E3 ubiquitin-protein ligase RF4 (RF4) from Arabidopsis thaliana (Mouse-ear cress).